Reading from the N-terminus, the 301-residue chain is F1 operon positive regulatory protein (301 aa).

An HTH araC/xylS-type domain is found at 8-107; the sequence is NSIIQYIEEN…GYTPRQYRMI (100 aa). 2 DNA-binding regions (H-T-H motif) span residues 26–47 and 74–97; these read DCLVLYSGFSRRYLQISFKEYV and IIEISAKLFYDSQQTFTREFKKIF.

Its function is as follows. Positive regulator of F1 operon expression. The polypeptide is F1 operon positive regulatory protein (caf1R) (Yersinia pestis).